The chain runs to 427 residues: Hydroxylamine reductase (427 aa).

Positions 3, 6, 15, and 21 each coordinate [4Fe-4S] cluster. 8 residues coordinate hybrid [4Fe-2O-2S] cluster: histidine 129, glutamate 153, cysteine 197, cysteine 283, cysteine 311, cysteine 336, glutamate 370, and lysine 372. Cysteine 283 carries the post-translational modification Cysteine persulfide.

The protein belongs to the HCP family. Requires [4Fe-4S] cluster as cofactor. Hybrid [4Fe-2O-2S] cluster is required as a cofactor.

It localises to the cytoplasm. The catalysed reaction is A + NH4(+) + H2O = hydroxylamine + AH2 + H(+). Its function is as follows. Catalyzes the reduction of hydroxylamine to form NH(3) and H(2)O. This chain is Hydroxylamine reductase, found in Methanothermobacter thermautotrophicus (strain ATCC 29096 / DSM 1053 / JCM 10044 / NBRC 100330 / Delta H) (Methanobacterium thermoautotrophicum).